A 516-amino-acid polypeptide reads, in one-letter code: Multicopper oxidase CueO (516 aa).

A signal peptide (tat-type signal) is located at residues 1–28 (MQRRDFLKYSVALGVASALPLWSRAVFA). Plastocyanin-like domains lie at 55–165 (GQST…IEDD), 227–292 (PRGW…DNKP), and 399–516 (GGKF…GFTV). 4 residues coordinate Cu cation: histidine 101, histidine 103, histidine 141, and histidine 143. 7 residues coordinate Cu cation: histidine 443, histidine 446, histidine 448, histidine 499, cysteine 500, histidine 501, and histidine 505.

The protein belongs to the multicopper oxidase family. Monomer. Requires Cu cation as cofactor. In terms of processing, predicted to be exported by the Tat system. The position of the signal peptide cleavage has not been experimentally proven.

It localises to the periplasm. The catalysed reaction is 4 Cu(+) + O2 + 4 H(+) = 4 Cu(2+) + 2 H2O. Multicopper oxidase involved in copper homeostasis and copper tolerance under aerobic conditions. Is responsible for the oxidation of Cu(+) to the less harmful Cu(2+) in the periplasm, thereby preventing Cu(+) from entering the cytoplasm. This chain is Multicopper oxidase CueO (cueO), found in Escherichia coli O157:H7.